Reading from the N-terminus, the 199-residue chain is Recombination protein RecR (199 aa).

The C4-type zinc finger occupies 58-73; it reads CKKCFNLTSEDECEIC. One can recognise a Toprim domain in the interval 81–175; that stretch reads KLICVVAETK…KVTRIAYGLP (95 aa).

This sequence belongs to the RecR family.

In terms of biological role, may play a role in DNA repair. It seems to be involved in an RecBC-independent recombinational process of DNA repair. It may act with RecF and RecO. The polypeptide is Recombination protein RecR (Prochlorococcus marinus (strain MIT 9301)).